Reading from the N-terminus, the 186-residue chain is Peptidyl-tRNA hydrolase (186 aa).

Position 14 (Tyr14) interacts with tRNA. The Proton acceptor role is filled by His19. TRNA is bound by residues Phe64, Asn66, and Asn112.

The protein belongs to the PTH family. As to quaternary structure, monomer.

Its subcellular location is the cytoplasm. It carries out the reaction an N-acyl-L-alpha-aminoacyl-tRNA + H2O = an N-acyl-L-amino acid + a tRNA + H(+). Its function is as follows. Hydrolyzes ribosome-free peptidyl-tRNAs (with 1 or more amino acids incorporated), which drop off the ribosome during protein synthesis, or as a result of ribosome stalling. In terms of biological role, catalyzes the release of premature peptidyl moieties from peptidyl-tRNA molecules trapped in stalled 50S ribosomal subunits, and thus maintains levels of free tRNAs and 50S ribosomes. The chain is Peptidyl-tRNA hydrolase from Listeria monocytogenes serovar 1/2a (strain ATCC BAA-679 / EGD-e).